Here is a 172-residue protein sequence, read N- to C-terminus: Small ribosomal subunit protein uS13c (172 aa).

The transit peptide at 1–47 (MAHTLATPVAPSVSLICNTKLSVSLSSSSLAFRPVNPKNGGGLSIKC) directs the protein to the chloroplast.

Component of the chloroplast small ribosomal subunit (SSU). Mature 70S chloroplast ribosomes of higher plants consist of a small (30S) and a large (50S) subunit. The 30S small subunit contains 1 molecule of ribosomal RNA (16S rRNA) and 24 different proteins. The 50S large subunit contains 3 rRNA molecules (23S, 5S and 4.5S rRNA) and 33 different proteins. uS13c interacts with translation factor pY (PSRP1).

The protein localises to the plastid. It is found in the chloroplast. Its function is as follows. Component of the chloroplast ribosome (chloro-ribosome), a dedicated translation machinery responsible for the synthesis of chloroplast genome-encoded proteins, including proteins of the transcription and translation machinery and components of the photosynthetic apparatus. The chain is Small ribosomal subunit protein uS13c (RPS13) from Spinacia oleracea (Spinach).